The chain runs to 651 residues: Maternal embryonic leucine zipper kinase (651 aa).

One can recognise a Protein kinase domain in the interval 13–265 (YELHETVGTG…VKHLLNHPWL (253 aa)). ATP-binding positions include 19–27 (VGTGGFAKV) and K42. D134 functions as the Proton acceptor in the catalytic mechanism. Phosphothreonine; by autocatalysis is present on T169. Phosphoserine; by autocatalysis is present on S173. Residues 284–323 (IDEDCVTELSVFYKYSRTSTTRLISEWSYDHITASYLLLH) are UBA-like. The autoinhibitory region stretch occupies residues 328 to 651 (HGKAVRLKHP…VEDILSSCKV (324 aa)). Residues 410–490 (SAPATPVVQR…TPTKKPIGTG (81 aa)) form a disordered region. The residue at position 414 (T414) is a Phosphothreonine. Positions 423 to 441 (HKNEDKENSNTAVARDENV) are enriched in basic and acidic residues. T449, T451, T481, and T483 each carry phosphothreonine. Residues 471–483 (QTKEKNQSKETPT) are compositionally biased toward basic and acidic residues. Residues S498, S505, and S517 each carry the phosphoserine modification. Positions 602 to 651 (SDFGKVTMQFELEVCQLSKSEVVGIRRQRLKGDAWVYKRLVEDILSSCKV) constitute a KA1 domain.

It belongs to the protein kinase superfamily. CAMK Ser/Thr protein kinase family. SNF1 subfamily. Autophosphorylated: autophosphorylation of the T-loop at Thr-169 and Ser-173 is required for activation. Phosphorylated by the maturation promoting factor (MPF), composed of cdk1 and a cyclin-B. Also phosphorylated by some MAPK. Phosphorylated during oocyte maturation. Dephosphorylation destabilizes the protein. There is some ambiguity for some phosphosites: Thr-481/Thr-483 and Ser-505/Ser-517. Post-translationally, degraded when cells exit mitosis.

The protein localises to the cell membrane. The catalysed reaction is L-seryl-[protein] + ATP = O-phospho-L-seryl-[protein] + ADP + H(+). It catalyses the reaction L-threonyl-[protein] + ATP = O-phospho-L-threonyl-[protein] + ADP + H(+). Its activity is regulated as follows. Activated by autophosphorylation of the T-loop at Thr-169 and Ser-173: in contrast to other members of the SNF1 subfamily, phosphorylation at Thr-169 is not mediated by STK11/LKB1 but via autophosphorylation instead. Serine/threonine-protein kinase involved in various processes such as cell cycle regulation, self-renewal of stem cells, apoptosis and splicing regulation. Also plays a role in primitive hematopoiesis, possibly by affecting the expression of genes critical for hematopoiesis. Plays a role in cytokinesis during early development. In Xenopus laevis (African clawed frog), this protein is Maternal embryonic leucine zipper kinase (melk).